The following is a 344-amino-acid chain: Signal peptide peptidase (344 aa).

At 1–11 the chain is on the lumenal side; the sequence is MKNCERFANLA. Residues 12 to 32 form a helical membrane-spanning segment; the sequence is LAGLTLAPLVVRVNPNLNVIL. The Cytoplasmic segment spans residues 33 to 62; it reads TACITVYVGCFRSVKDTPPTETMSKEHAMR. Residues 63–83 form a helical membrane-spanning segment; that stretch reads FPLVGSAMLLSLFLLFKFLSK. At 84-89 the chain is on the lumenal side; sequence DLVNAV. A helical transmembrane segment spans residues 90–110; it reads LTAYFFVLGIVALSATLLPAI. Over 111–136 the chain is Cytoplasmic; it reads RRFLPNPWNDNLIVWRFPYFKSLEVE. The chain crosses the membrane as a helical span at residues 137 to 157; sequence FTKSQVVAGIPGTFFCAWYAW. At 158–160 the chain is on the lumenal side; sequence KKH. The helical transmembrane segment at 161–181 threads the bilayer; the sequence is WLANNILGLSFCIQGIEMLSL. Over 182–188 the chain is Cytoplasmic; that stretch reads GSFKTGA. The chain crosses the membrane as a helical span at residues 189–209; the sequence is ILLAGLFFYDIFWVFFTPVMV. Aspartate 198 is an active-site residue. The Lumenal portion of the chain corresponds to 210-230; that stretch reads SVAKSFDAPIKLLFPTGDALR. A helical transmembrane segment spans residues 231-251; that stretch reads PYSMLGLGDIVIPGIFVALAL. Aspartate 239 is a catalytic residue. Over 252 to 263 the chain is Cytoplasmic; that stretch reads RFDVSRRRQPQY. Residues 264–284 form a helical membrane-spanning segment; it reads FTSAFIGYAVGVILTIVVMNW. The Lumenal segment spans residues 285–290; sequence FQAAQP. A PAL motif is present at residues 290 to 292; that stretch reads PAL. A helical transmembrane segment spans residues 291–311; that stretch reads ALLYIVPAVIGFLASHCIWNG. The Cytoplasmic portion of the chain corresponds to 312–344; it reads DIKPLLAFDESKTEEATTDESKTSEEVNKAHDE. Positions 323–344 are disordered; that stretch reads KTEEATTDESKTSEEVNKAHDE.

The protein belongs to the peptidase A22B family. Ubiquitous with the highest expression in emerging leaves, roots, and floral tissues (at the protein level). Highly detected in pollen.

It is found in the endoplasmic reticulum membrane. Its function is as follows. Intramembrane-cleaving aspartic protease (I-CLiP) that cleaves type II membrane signal peptides in the hydrophobic plane of the membrane. Catalyzes intramembrane proteolysis of some signal peptides after they have been cleaved from a preprotein, resulting in the release of the fragment from the ER membrane into the cytoplasm. Plays a critical role in the development and function of the reproductive tissues, especially in pollen development. In Arabidopsis thaliana (Mouse-ear cress), this protein is Signal peptide peptidase (SPP).